The following is a 180-amino-acid chain: Large ribosomal subunit protein uL6 (180 aa).

Belongs to the universal ribosomal protein uL6 family. As to quaternary structure, part of the 50S ribosomal subunit.

In terms of biological role, this protein binds to the 23S rRNA, and is important in its secondary structure. It is located near the subunit interface in the base of the L7/L12 stalk, and near the tRNA binding site of the peptidyltransferase center. The sequence is that of Large ribosomal subunit protein uL6 from Clostridium tetani (strain Massachusetts / E88).